We begin with the raw amino-acid sequence, 403 residues long: Phosphopentomutase (403 aa).

Positions 13, 298, 303, 339, 340, and 351 each coordinate Mn(2+).

The protein belongs to the phosphopentomutase family. It depends on Mn(2+) as a cofactor.

Its subcellular location is the cytoplasm. It catalyses the reaction 2-deoxy-alpha-D-ribose 1-phosphate = 2-deoxy-D-ribose 5-phosphate. It carries out the reaction alpha-D-ribose 1-phosphate = D-ribose 5-phosphate. The protein operates within carbohydrate degradation; 2-deoxy-D-ribose 1-phosphate degradation; D-glyceraldehyde 3-phosphate and acetaldehyde from 2-deoxy-alpha-D-ribose 1-phosphate: step 1/2. Its function is as follows. Isomerase that catalyzes the conversion of deoxy-ribose 1-phosphate (dRib-1-P) and ribose 1-phosphate (Rib-1-P) to deoxy-ribose 5-phosphate (dRib-5-P) and ribose 5-phosphate (Rib-5-P), respectively. The chain is Phosphopentomutase from Streptococcus equi subsp. zooepidemicus (strain H70).